Consider the following 105-residue polypeptide: Large ribosomal subunit protein uL24 (105 aa).

It belongs to the universal ribosomal protein uL24 family. As to quaternary structure, part of the 50S ribosomal subunit.

One of two assembly initiator proteins, it binds directly to the 5'-end of the 23S rRNA, where it nucleates assembly of the 50S subunit. In terms of biological role, one of the proteins that surrounds the polypeptide exit tunnel on the outside of the subunit. This is Large ribosomal subunit protein uL24 from Mycobacterium sp. (strain JLS).